Here is a 605-residue protein sequence, read N- to C-terminus: Ankyrin repeat domain-containing protein 13D (605 aa).

ANK repeat units lie at residues 39 to 68 (RGRT…NVGK) and 72 to 101 (QGWA…YQRA). The segment at 306-333 (AQQHSSHTGAPVQQAASPTNPTAISPEE) is disordered. The segment covering 319–328 (QAASPTNPTA) has biased composition (polar residues). UIM domains lie at 482 to 501 (EDDD…AGTE) and 528 to 547 (EEQL…STEP). Residues 541-605 (LQLSTEPRGP…RILQLSLTEH (65 aa)) are disordered. Residues 550-563 (PGSPPRTPPAPGPP) show a composition bias toward pro residues. S552 bears the Phosphoserine mark. T556 bears the Phosphothreonine mark. Positions 564 to 575 (SFEEQLRLALEL) are enriched in low complexity. UIM domains lie at 564 to 583 (SFEE…QEER) and 589 to 605 (QEEE…LTEH). Over residues 576–589 (SSREQEERERRGQQ) the composition is skewed to basic and acidic residues.

As to quaternary structure, interacts with EGFR (ubiquitinated); the interaction is direct and may regulate EGFR internalization.

Its subcellular location is the cell membrane. The protein localises to the late endosome. Its function is as follows. Ubiquitin-binding protein that specifically recognizes and binds 'Lys-63'-linked ubiquitin. Does not bind 'Lys-48'-linked ubiquitin. Positively regulates the internalization of ligand-activated EGFR by binding to the Ub moiety of ubiquitinated EGFR at the cell membrane. In Homo sapiens (Human), this protein is Ankyrin repeat domain-containing protein 13D (ANKRD13D).